The chain runs to 202 residues: Shikimate kinase (202 aa).

20-25 (GSGKST) serves as a coordination point for ATP. Mg(2+) is bound at residue Ser24. Asp42, Arg66, and Gly88 together coordinate substrate. Residue Arg126 participates in ATP binding. A substrate-binding site is contributed by Arg153.

The protein belongs to the shikimate kinase family. Monomer. The cofactor is Mg(2+).

The protein localises to the cytoplasm. The catalysed reaction is shikimate + ATP = 3-phosphoshikimate + ADP + H(+). The protein operates within metabolic intermediate biosynthesis; chorismate biosynthesis; chorismate from D-erythrose 4-phosphate and phosphoenolpyruvate: step 5/7. Catalyzes the specific phosphorylation of the 3-hydroxyl group of shikimic acid using ATP as a cosubstrate. The polypeptide is Shikimate kinase (Chlorobium luteolum (strain DSM 273 / BCRC 81028 / 2530) (Pelodictyon luteolum)).